The sequence spans 284 residues: MPELPEVETLRRDLLIHLPGERVVGVEVLRSDSVGYPADPAIFIEQMQGQIFSDRMLRRGKYLLLYFARGAALGVHLRMSGRLLWRCGEAPLEPHTRVRIPMASGHELRFEDMRVFGRLWLIPVGVPPERVMGGLTRLGPEPFAEMFDGPYLAGRFAGRNQPVKSALLDQQLVAGVGNIYADEALFSSGIHPALPVGGLDAAALERLHRAVVKVLEAGIAQRGATLRNYTDAQGINGNYAGTAWVYGRKGQPCRVCNTPIERIRLAGRSTHFCPTCQRAQQSVQ.

Pro2 serves as the catalytic Schiff-base intermediate with DNA. Glu3 acts as the Proton donor in catalysis. The Proton donor; for beta-elimination activity role is filled by Lys61. His95, Arg114, and Arg159 together coordinate DNA. The FPG-type zinc-finger motif lies at 244 to 278 (WVYGRKGQPCRVCNTPIERIRLAGRSTHFCPTCQR). Arg268 serves as the catalytic Proton donor; for delta-elimination activity.

Belongs to the FPG family. Monomer. The cofactor is Zn(2+).

It carries out the reaction Hydrolysis of DNA containing ring-opened 7-methylguanine residues, releasing 2,6-diamino-4-hydroxy-5-(N-methyl)formamidopyrimidine.. It catalyses the reaction 2'-deoxyribonucleotide-(2'-deoxyribose 5'-phosphate)-2'-deoxyribonucleotide-DNA = a 3'-end 2'-deoxyribonucleotide-(2,3-dehydro-2,3-deoxyribose 5'-phosphate)-DNA + a 5'-end 5'-phospho-2'-deoxyribonucleoside-DNA + H(+). Functionally, involved in base excision repair of DNA damaged by oxidation or by mutagenic agents. Acts as a DNA glycosylase that recognizes and removes damaged bases. Has a preference for oxidized purines, such as 7,8-dihydro-8-oxoguanine (8-oxoG). Has AP (apurinic/apyrimidinic) lyase activity and introduces nicks in the DNA strand. Cleaves the DNA backbone by beta-delta elimination to generate a single-strand break at the site of the removed base with both 3'- and 5'-phosphates. This chain is Formamidopyrimidine-DNA glycosylase, found in Gloeobacter violaceus (strain ATCC 29082 / PCC 7421).